We begin with the raw amino-acid sequence, 935 residues long: Probable mediator of RNA polymerase II transcription subunit 15c (935 aa).

The segment covering 1 to 13 has biased composition (polar residues); sequence MEGNTNWKPNEQG. 5 disordered regions span residues 1 to 28, 170 to 190, 495 to 526, 548 to 611, and 635 to 654; these read MEGN…WRSQ, NLPT…VSSS, SSVQ…HQMQ, QQVS…PVPG, and SSSK…PPEP. Residues 511–526 show a composition bias toward low complexity; it reads MQQQQPQQGNHQHQMQ. Composition is skewed to polar residues over residues 548 to 577 and 635 to 644; these read QQVS…SPQL and SSSKLGTQET.

The protein belongs to the plant Mediator complex subunit 15 family. As to quaternary structure, component of the Mediator complex.

The protein localises to the nucleus. In terms of biological role, component of the Mediator complex, a coactivator involved in the regulated transcription of nearly all RNA polymerase II-dependent genes. Mediator functions as a bridge to convey information from gene-specific regulatory proteins to the basal RNA polymerase II transcription machinery. The Mediator complex, having a compact conformation in its free form, is recruited to promoters by direct interactions with regulatory proteins and serves for the assembly of a functional preinitiation complex with RNA polymerase II and the general transcription factors. This is Probable mediator of RNA polymerase II transcription subunit 15c (MED15C) from Arabidopsis thaliana (Mouse-ear cress).